Reading from the N-terminus, the 560-residue chain is DNA ligase B (560 aa).

K124 acts as the N6-AMP-lysine intermediate in catalysis.

The protein belongs to the NAD-dependent DNA ligase family. LigB subfamily.

The enzyme catalyses NAD(+) + (deoxyribonucleotide)n-3'-hydroxyl + 5'-phospho-(deoxyribonucleotide)m = (deoxyribonucleotide)n+m + AMP + beta-nicotinamide D-nucleotide.. In terms of biological role, catalyzes the formation of phosphodiester linkages between 5'-phosphoryl and 3'-hydroxyl groups in double-stranded DNA using NAD as a coenzyme and as the energy source for the reaction. The polypeptide is DNA ligase B (Escherichia coli O7:K1 (strain IAI39 / ExPEC)).